An 842-amino-acid chain; its full sequence is Elongation factor 2 (842 aa).

One can recognise a tr-type G domain in the interval 17–346; that stretch reads ANVRNMSVIA…MIVLHLPSPV (330 aa). GTP is bound by residues 26 to 33, 158 to 161, and 213 to 215; these read AHVDHGKS, NKVD, and SGL. Residue histidine 699 is modified to Diphthamide.

The protein belongs to the TRAFAC class translation factor GTPase superfamily. Classic translation factor GTPase family. EF-G/EF-2 subfamily.

It is found in the cytoplasm. The enzyme catalyses GTP + H2O = GDP + phosphate + H(+). The protein operates within protein biosynthesis; polypeptide chain elongation. In terms of biological role, catalyzes the GTP-dependent ribosomal translocation step during translation elongation. During this step, the ribosome changes from the pre-translocational (PRE) to the post-translocational (POST) state as the newly formed A-site-bound peptidyl-tRNA and P-site-bound deacylated tRNA move to the P and E sites, respectively. Catalyzes the coordinated movement of the two tRNA molecules, the mRNA and conformational changes in the ribosome. The protein is Elongation factor 2 (EFT2) of Meyerozyma guilliermondii (strain ATCC 6260 / CBS 566 / DSM 6381 / JCM 1539 / NBRC 10279 / NRRL Y-324) (Yeast).